We begin with the raw amino-acid sequence, 326 residues long: Acetyl-coenzyme A carboxylase carboxyl transferase subunit alpha (326 aa).

The CoA carboxyltransferase C-terminal domain maps to 45 to 298; the sequence is LEARAMQLRE…KQVLLENLDE (254 aa).

The protein belongs to the AccA family. Acetyl-CoA carboxylase is a heterohexamer composed of biotin carboxyl carrier protein (AccB), biotin carboxylase (AccC) and two subunits each of ACCase subunit alpha (AccA) and ACCase subunit beta (AccD).

The protein localises to the cytoplasm. The enzyme catalyses N(6)-carboxybiotinyl-L-lysyl-[protein] + acetyl-CoA = N(6)-biotinyl-L-lysyl-[protein] + malonyl-CoA. It participates in lipid metabolism; malonyl-CoA biosynthesis; malonyl-CoA from acetyl-CoA: step 1/1. Functionally, component of the acetyl coenzyme A carboxylase (ACC) complex. First, biotin carboxylase catalyzes the carboxylation of biotin on its carrier protein (BCCP) and then the CO(2) group is transferred by the carboxyltransferase to acetyl-CoA to form malonyl-CoA. This is Acetyl-coenzyme A carboxylase carboxyl transferase subunit alpha from Nostoc punctiforme (strain ATCC 29133 / PCC 73102).